A 468-amino-acid chain; its full sequence is Uronate isomerase (468 aa).

Belongs to the metallo-dependent hydrolases superfamily. Uronate isomerase family.

The catalysed reaction is D-glucuronate = D-fructuronate. It catalyses the reaction aldehydo-D-galacturonate = keto-D-tagaturonate. The protein operates within carbohydrate metabolism; pentose and glucuronate interconversion. The protein is Uronate isomerase of Brachyspira hyodysenteriae (strain ATCC 49526 / WA1).